Here is a 317-residue protein sequence, read N- to C-terminus: MWLYLAVLLGLYYLLRWFRERQVVSHLQDKFVFITGCDSGFGNQLARQLDLRGLRVLAGCLTEQGAEQLRNQTSDRLQTVILDVTKTESIAAATEWVKECVGDRGLWGLVNNAGIFHSHGYAEWIKIETYRDTLRVNLIGVIEVTLSMLPLVRKAQGRIVNVSSILGRIAFFGAVYSCSKYGVEAFSDILRRELQHFGVKVSMVEPGYFRTAMTDWQKFSEIMKQIWKETPAHIKETYGQKFFDAYHDLMKQGLLSCSTNLNLVTDCMEHALTSVHPRTRYSAGWDAQFFFVPLSYLPTSLADYILTRSWPKPAQAV.

The signal sequence occupies residues M1–W17. Residue F33–L57 coordinates NAD(+). N-linked (GlcNAc...) asparagine glycosylation is found at N71 and N161. S164 provides a ligand contact to substrate. Y176 serves as the catalytic Proton acceptor.

The protein belongs to the short-chain dehydrogenases/reductases (SDR) family.

Its subcellular location is the microsome membrane. The protein localises to the endoplasmic reticulum membrane. It catalyses the reaction all-trans-retinol--[retinol-binding protein] + NAD(+) = all-trans-retinal--[retinol-binding protein] + NADH + H(+). It carries out the reaction all-trans-retinol + NAD(+) = all-trans-retinal + NADH + H(+). The enzyme catalyses androsterone + NAD(+) = 5alpha-androstan-3,17-dione + NADH + H(+). The catalysed reaction is testosterone + NAD(+) = androst-4-ene-3,17-dione + NADH + H(+). It catalyses the reaction 5alpha-androstane-3alpha,17beta-diol + NAD(+) = 17beta-hydroxy-5alpha-androstan-3-one + NADH + H(+). It carries out the reaction 17beta-estradiol + NAD(+) = estrone + NADH + H(+). The enzyme catalyses 17beta-estradiol + NADP(+) = estrone + NADPH + H(+). The catalysed reaction is 3alpha-hydroxy-5alpha-pregnan-20-one + NAD(+) = 5alpha-pregnane-3,20-dione + NADH + H(+). It catalyses the reaction 5alpha-androstane-3beta,17beta-diol + NAD(+) = 17beta-hydroxy-5alpha-androstan-3-one + NADH + H(+). It carries out the reaction 3beta-hydroxy-5alpha-androstan-17-one + NAD(+) = 5alpha-androstan-3,17-dione + NADH + H(+). In terms of biological role, NAD-dependent oxidoreductase with broad substrate specificity that shows both oxidative and reductive activity (in vitro). Has 17-beta-hydroxysteroid dehydrogenase activity towards various steroids (in vitro). Converts 5-alpha-androstan-3-alpha,17-beta-diol to androsterone and estradiol to estrone (in vitro). Has 3-alpha-hydroxysteroid dehydrogenase activity towards androsterone (in vitro). Has retinol dehydrogenase activity towards all-trans-retinol (in vitro). Can convert androsterone to epi-androsterone. Androsterone is first oxidized to 5-alpha-androstane-3,17-dione and then reduced to epi-andosterone. Can act on both C-19 and C-21 3-alpha-hydroxysteroids. The polypeptide is 17-beta-hydroxysteroid dehydrogenase type 6 (HSD17B6) (Bos taurus (Bovine)).